Consider the following 86-residue polypeptide: Small ribosomal subunit protein uS17 (86 aa).

The protein belongs to the universal ribosomal protein uS17 family. Part of the 30S ribosomal subunit.

One of the primary rRNA binding proteins, it binds specifically to the 5'-end of 16S ribosomal RNA. The polypeptide is Small ribosomal subunit protein uS17 (Desulfotalea psychrophila (strain LSv54 / DSM 12343)).